Consider the following 1046-residue polypeptide: UDP-N-acetylglucosamine--peptide N-acetylglucosaminyltransferase 110 kDa subunit (1046 aa).

Ala2 carries the post-translational modification N-acetylalanine. A phosphoserine; by GSK3-beta; alternate mark is found at Ser3 and Ser4. Ser3 and Ser4 each carry an O-linked (GlcNAc) serine; alternate glycan. Ser20 carries the phosphoserine modification. TPR repeat units lie at residues 21-54 (FQGLAELAHREYQAGDFEAAERHCMQLWRQEPDN), 89-122 (AEAYSNLGNVYKERGQLQEAIEHYRHALRLKPDF), 123-156 (IDGYINLAAALVAAGDMEGAVQAYVSALQYNPDL), 157-190 (YCVRSDLGNLLKALGRLEEAKACYLKAIETQPNF), 191-224 (AVAWSNLGCVFNAQGEIWLAIHHFEKAVTLDPNF), 225-258 (LDAYINLGNVLKEARIFDRAVAAYLRALSLSPNH), 259-292 (AVVHGNLACVYYEQGLIDLAIDTYRRAIELQPHF), 293-326 (PDAYCNLANALKEKGSVAEAEDCYNTALRLCPTH), 327-360 (ADSLNNLANIKREQGNIEEAVRLYRKALEVFPEF), 361-394 (AAAHSNLASVLQQQGKLQEALMHYKEAIRISPTF), 395-428 (ADAYSNMGNTLKEMQDVQGALQCYTRAIQINPAF), and 429-462 (ADAHSNLASIHKDSGNIPEAIASYRTALKLKPDF). Ser399 carries O-linked (GlcNAc) serine; by autocatalysis glycosylation. Thr454 is modified (phosphothreonine). The TPR 13; truncated repeat unit spans residues 463–473 (PDAYCNLAHCL). Residues 464–466 (DAY) carry the DFP motif motif. Positions 487 to 503 (KKLVSIVAEQLEKNRLP) match the Nuclear localization signal motif. His508 serves as the catalytic Proton acceptor. UDP-binding positions include Gln849, Lys852, 906–908 (APK), 911–914 (HVRR), 930–932 (HTT), and Asp935. Residue Tyr989 is modified to Phosphotyrosine. Residues 991 to 1010 (KKIRGKVWKQRISSPLFNTK) are required for phosphatidylinositol 3,4,5-triphosphate binding.

The protein belongs to the glycosyltransferase 41 family. O-GlcNAc transferase subfamily. In terms of assembly, monomer; may exist in different oligomerization states in cells. Homotrimer, oligomerizes via TPR repeats 6 and 7. Trimerization is not necessary for activity in vitro, however it increases affinity for UDP-GlcNAc. Component of a THAP1/THAP3-HCFC1-OGT complex. Component of the NSL complex at least composed of MOF/KAT8, KANSL1, KANSL2, KANSL3, MCRS1, PHF20, OGT1/OGT, WDR5 and HCFC1. Found in a complex with KIF5B, RHOT1, RHOT2 and TRAK1. Found in a complex composed of at least SINHCAF, SIN3A, HDAC1, SAP30, RBBP4, OGT and TET1. Component of a complex composed of KMT2E/MLL5, OGT and USP7; the complex stabilizes KMT2E/MLL5, preventing KMT2E/MLL5 ubiquitination and proteasomal-mediated degradation. Interacts (via TPRs 1-6) with SIN3A; the interaction mediates transcriptional repression in parallel with histone deacetylase. Interacts (via TPR 5-6) with TET1, TET2 and TET3. Interacts (via TPR repeats 6 and 7) with ATXN10. Interacts with NSD2. Interacts with PROSER1; this interaction mediates TET2 O-GlcNAcylation and stability by promoting the interaction between OGT and TET2. Ubiquitinated by the SCF(FBXO31) complex, leading to its proteasomal degradation. Post-translationally, phosphorylation on Ser-3 or Ser-4 by GSK3-beta positively regulates its activity. Phosphorylation at Thr-454 by AMPK promotes nuclear localization. In terms of processing, glycosylated via autocatalysis; O-GlcNAcylation at Ser-399 promotes nuclear localization.

It localises to the cytoplasm. It is found in the nucleus. The protein localises to the cell membrane. Its subcellular location is the mitochondrion membrane. The protein resides in the cell projection. The catalysed reaction is L-seryl-[protein] + UDP-N-acetyl-alpha-D-glucosamine = 3-O-(N-acetyl-beta-D-glucosaminyl)-L-seryl-[protein] + UDP + H(+). The enzyme catalyses L-threonyl-[protein] + UDP-N-acetyl-alpha-D-glucosamine = 3-O-(N-acetyl-beta-D-glucosaminyl)-L-threonyl-[protein] + UDP + H(+). The protein operates within protein modification; protein glycosylation. Subject to product inhibition by UDP. Functionally, catalyzes the transfer of a single N-acetylglucosamine from UDP-GlcNAc to a serine or threonine residue in cytoplasmic and nuclear proteins resulting in their modification with a beta-linked N-acetylglucosamine (O-GlcNAc). Glycosylates a large and diverse number of proteins including histone H2B, AKT1, AMPK, ATG4B, CAPRIN1, EZH2, FNIP1, GSDMD, KRT7, LMNA, LMNB1, LMNB2, RPTOR, HOXA1, PFKL, KMT2E/MLL5, MAPT/TAU, TET2, RBL2, RET, NOD2 and HCFC1. Can regulate their cellular processes via cross-talk between glycosylation and phosphorylation or by affecting proteolytic processing. Involved in insulin resistance in muscle and adipocyte cells via glycosylating insulin signaling components and inhibiting the 'Thr-308' phosphorylation of AKT1, enhancing IRS1 phosphorylation and attenuating insulin signaling. Involved in glycolysis regulation by mediating glycosylation of 6-phosphofructokinase PFKL, inhibiting its activity. Plays a key role in chromatin structure by mediating O-GlcNAcylation of 'Ser-112' of histone H2B: recruited to CpG-rich transcription start sites of active genes via its interaction with TET proteins (TET1, TET2 or TET3). As part of the NSL complex indirectly involved in acetylation of nucleosomal histone H4 on several lysine residues. O-GlcNAcylation of 'Ser-75' of EZH2 increases its stability, and facilitating the formation of H3K27me3 by the PRC2/EED-EZH2 complex. Stabilizes KMT2E/MLL5 by mediating its glycosylation, thereby preventing KMT2E/MLL5 ubiquitination. Regulates circadian oscillation of the clock genes and glucose homeostasis in the liver. Stabilizes clock proteins BMAL1 and CLOCK through O-glycosylation, which prevents their ubiquitination and subsequent degradation. Promotes the CLOCK-BMAL1-mediated transcription of genes in the negative loop of the circadian clock such as PER1/2 and CRY1/2. O-glycosylates HCFC1 and regulates its proteolytic processing and transcriptional activity. Component of a THAP1/THAP3-HCFC1-OGT complex that is required for the regulation of the transcriptional activity of RRM1. Regulates mitochondrial motility in neurons by mediating glycosylation of TRAK1. Promotes autophagy by mediating O-glycosylation of ATG4B. Acts as a regulator of mTORC1 signaling by mediating O-glycosylation of RPTOR and FNIP1: O-GlcNAcylation of RPTOR in response to glucose sufficiency promotes activation of the mTORC1 complex. The sequence is that of UDP-N-acetylglucosamine--peptide N-acetylglucosaminyltransferase 110 kDa subunit (Ogt) from Mus musculus (Mouse).